A 247-amino-acid chain; its full sequence is Spermatogenesis-associated protein 46 (247 aa).

Residues 125-164 form a disordered region; it reads QRDSCLPEDTADSVCSSSPSPENTCPREATKKSRPGPDTT. The segment covering 137-147 has biased composition (polar residues); that stretch reads SVCSSSPSPEN.

It is found in the nucleus membrane. Plays a role in spermiogenesis and fertilization. This chain is Spermatogenesis-associated protein 46 (SPATA46), found in Bos taurus (Bovine).